The following is a 185-amino-acid chain: Elongation factor P (185 aa).

The protein belongs to the elongation factor P family.

Its subcellular location is the cytoplasm. The protein operates within protein biosynthesis; polypeptide chain elongation. Its function is as follows. Involved in peptide bond synthesis. Stimulates efficient translation and peptide-bond synthesis on native or reconstituted 70S ribosomes in vitro. Probably functions indirectly by altering the affinity of the ribosome for aminoacyl-tRNA, thus increasing their reactivity as acceptors for peptidyl transferase. This Streptococcus pyogenes serotype M28 (strain MGAS6180) protein is Elongation factor P.